The following is a 131-amino-acid chain: Holo-[acyl-carrier-protein] synthase (131 aa).

Residues Asp8 and Glu59 each coordinate Mg(2+).

Belongs to the P-Pant transferase superfamily. AcpS family. Requires Mg(2+) as cofactor.

It localises to the cytoplasm. The catalysed reaction is apo-[ACP] + CoA = holo-[ACP] + adenosine 3',5'-bisphosphate + H(+). Transfers the 4'-phosphopantetheine moiety from coenzyme A to a Ser of acyl-carrier-protein. This chain is Holo-[acyl-carrier-protein] synthase, found in Rickettsia africae (strain ESF-5).